The primary structure comprises 327 residues: Protein UL95 homolog (327 aa).

This sequence belongs to the herpesviridae UL95 family. In terms of assembly, interacts with ORF24; this interaction may serve as a core scaffold for the assembly of the viral transcription initiation complex. Interacts with ORF66. Interacts with ORF18. Interacts with ORF23. Interacts with ORF31. Interacts with host EPAS1; this interaction stabilizes host EPAS1, ensuring its transcriptional activity.

It localises to the host nucleus. In terms of biological role, participates in the expression of late viral mRNAs in part by interacting with ORF24. Expressed before viral DNA replication, assembles at the viral pre-replication complexes (pre-RCs) and thus serves as a hub for recruiting a viral transcription complex to ORF24 to promote late viral gene expression. Also plays a regulatory role in the viral life cycle by regulating host transcriptional regulators HIF1A and EPAS1. The polypeptide is Protein UL95 homolog (ORF34) (Homo sapiens (Human)).